Reading from the N-terminus, the 616-residue chain is Dihydroxy-acid dehydratase (616 aa).

A Mg(2+)-binding site is contributed by Asp-81. Cys-122 is a [2Fe-2S] cluster binding site. Residues Asp-123 and Lys-124 each contribute to the Mg(2+) site. At Lys-124 the chain carries N6-carboxylysine. Cys-195 is a binding site for [2Fe-2S] cluster. Position 491 (Glu-491) interacts with Mg(2+). The Proton acceptor role is filled by Ser-517.

Belongs to the IlvD/Edd family. In terms of assembly, homodimer. It depends on [2Fe-2S] cluster as a cofactor. Mg(2+) is required as a cofactor.

The enzyme catalyses (2R)-2,3-dihydroxy-3-methylbutanoate = 3-methyl-2-oxobutanoate + H2O. The catalysed reaction is (2R,3R)-2,3-dihydroxy-3-methylpentanoate = (S)-3-methyl-2-oxopentanoate + H2O. It functions in the pathway amino-acid biosynthesis; L-isoleucine biosynthesis; L-isoleucine from 2-oxobutanoate: step 3/4. The protein operates within amino-acid biosynthesis; L-valine biosynthesis; L-valine from pyruvate: step 3/4. Functionally, functions in the biosynthesis of branched-chain amino acids. Catalyzes the dehydration of (2R,3R)-2,3-dihydroxy-3-methylpentanoate (2,3-dihydroxy-3-methylvalerate) into 2-oxo-3-methylpentanoate (2-oxo-3-methylvalerate) and of (2R)-2,3-dihydroxy-3-methylbutanoate (2,3-dihydroxyisovalerate) into 2-oxo-3-methylbutanoate (2-oxoisovalerate), the penultimate precursor to L-isoleucine and L-valine, respectively. This Erwinia tasmaniensis (strain DSM 17950 / CFBP 7177 / CIP 109463 / NCPPB 4357 / Et1/99) protein is Dihydroxy-acid dehydratase.